The primary structure comprises 861 residues: DNA mismatch repair protein MutS (861 aa).

Position 617 to 624 (Gly-617 to Ser-624) interacts with ATP. A disordered region spans residues Glu-799–Gln-822. Residues Pro-808–Pro-820 are compositionally biased toward low complexity.

Belongs to the DNA mismatch repair MutS family.

In terms of biological role, this protein is involved in the repair of mismatches in DNA. It is possible that it carries out the mismatch recognition step. This protein has a weak ATPase activity. The protein is DNA mismatch repair protein MutS of Pseudomonas putida (strain GB-1).